Here is a 120-residue protein sequence, read N- to C-terminus: uncharacterized protein (120 aa).

Residues 40-62 (SFLTDALLNLIYILFFSSSVFNW) form a helical membrane-spanning segment.

It is found in the membrane. This is an uncharacterized protein from Saccharomyces cerevisiae (strain ATCC 204508 / S288c) (Baker's yeast).